Reading from the N-terminus, the 63-residue chain is MLYLSELTILSITTGSETKILSEKSPFLKETDQTTTRTINYSKPQNRTTTSQAHYLGHKKAWL.

This is an uncharacterized protein from Bdellovibrio bacteriovorus (Bacteriophage phiMH2K).